We begin with the raw amino-acid sequence, 319 residues long: Aspartate carbamoyltransferase catalytic subunit (319 aa).

Positions 64 and 65 each coordinate carbamoyl phosphate. Position 92 (lysine 92) interacts with L-aspartate. The carbamoyl phosphate site is built by arginine 114, histidine 142, and glutamine 145. L-aspartate is bound by residues arginine 175 and arginine 229. Carbamoyl phosphate is bound by residues glycine 270 and proline 271.

It belongs to the aspartate/ornithine carbamoyltransferase superfamily. ATCase family. As to quaternary structure, heterododecamer (2C3:3R2) of six catalytic PyrB chains organized as two trimers (C3), and six regulatory PyrI chains organized as three dimers (R2).

It catalyses the reaction carbamoyl phosphate + L-aspartate = N-carbamoyl-L-aspartate + phosphate + H(+). It participates in pyrimidine metabolism; UMP biosynthesis via de novo pathway; (S)-dihydroorotate from bicarbonate: step 2/3. Functionally, catalyzes the condensation of carbamoyl phosphate and aspartate to form carbamoyl aspartate and inorganic phosphate, the committed step in the de novo pyrimidine nucleotide biosynthesis pathway. The sequence is that of Aspartate carbamoyltransferase catalytic subunit from Rhodospirillum rubrum (strain ATCC 11170 / ATH 1.1.1 / DSM 467 / LMG 4362 / NCIMB 8255 / S1).